The chain runs to 221 residues: Endonuclease V (221 aa).

The Mg(2+) site is built by aspartate 44 and aspartate 112.

It belongs to the endonuclease V family. Mg(2+) is required as a cofactor.

The protein resides in the cytoplasm. It carries out the reaction Endonucleolytic cleavage at apurinic or apyrimidinic sites to products with a 5'-phosphate.. DNA repair enzyme involved in the repair of deaminated bases. Selectively cleaves double-stranded DNA at the second phosphodiester bond 3' to a deoxyinosine leaving behind the intact lesion on the nicked DNA. The sequence is that of Endonuclease V from Nostoc punctiforme (strain ATCC 29133 / PCC 73102).